Here is a 459-residue protein sequence, read N- to C-terminus: Cysteine--tRNA ligase (459 aa).

Cys-28 is a binding site for Zn(2+). The 'HIGH' region signature appears at 30-40 (VTIYDLCHIGH). Zn(2+) is bound by residues Cys-209, His-234, and Glu-238. A 'KMSKS' region motif is present at residues 266–270 (KMSKS). An ATP-binding site is contributed by Lys-269.

Belongs to the class-I aminoacyl-tRNA synthetase family. As to quaternary structure, monomer. Requires Zn(2+) as cofactor.

It is found in the cytoplasm. It catalyses the reaction tRNA(Cys) + L-cysteine + ATP = L-cysteinyl-tRNA(Cys) + AMP + diphosphate. This Shewanella piezotolerans (strain WP3 / JCM 13877) protein is Cysteine--tRNA ligase.